Reading from the N-terminus, the 67-residue chain is uncharacterized protein (67 aa).

The chain crosses the membrane as a helical span at residues 12–34; that stretch reads YYYAHQTVCITSTGFALCFVVQA.

The protein resides in the membrane. This is an uncharacterized protein from Saccharomyces cerevisiae (strain ATCC 204508 / S288c) (Baker's yeast).